The primary structure comprises 166 residues: Mitochondrial fission process protein 1 (166 aa).

2 helical membrane passes run serine 34–alanine 54 and alanine 80–isoleucine 100. The residue at position 123 (lysine 123) is an N6-succinyllysine. A helical membrane pass occupies residues leucine 129–leucine 149.

This sequence belongs to the MTFP1 family.

Its subcellular location is the mitochondrion inner membrane. Its function is as follows. Involved in the mitochondrial division probably by regulating membrane fission. Loss-of-function induces the release of cytochrome c, which activates the caspase cascade and leads to apoptosis. The chain is Mitochondrial fission process protein 1 (MTFP1) from Homo sapiens (Human).